A 412-amino-acid chain; its full sequence is 1-deoxy-D-xylulose 5-phosphate reductoisomerase (412 aa).

8 residues coordinate NADPH: T10, G11, S12, I13, G36, K37, N38, and N130. Residue K131 participates in 1-deoxy-D-xylulose 5-phosphate binding. E132 lines the NADPH pocket. D156 lines the Mn(2+) pocket. Residues S157, E158, S194, and H217 each coordinate 1-deoxy-D-xylulose 5-phosphate. E158 contacts Mn(2+). G223 is an NADPH binding site. Positions 230, 235, 236, and 239 each coordinate 1-deoxy-D-xylulose 5-phosphate. E239 contributes to the Mn(2+) binding site.

It belongs to the DXR family. The cofactor is Mg(2+). It depends on Mn(2+) as a cofactor.

The catalysed reaction is 2-C-methyl-D-erythritol 4-phosphate + NADP(+) = 1-deoxy-D-xylulose 5-phosphate + NADPH + H(+). It functions in the pathway isoprenoid biosynthesis; isopentenyl diphosphate biosynthesis via DXP pathway; isopentenyl diphosphate from 1-deoxy-D-xylulose 5-phosphate: step 1/6. Functionally, catalyzes the NADPH-dependent rearrangement and reduction of 1-deoxy-D-xylulose-5-phosphate (DXP) to 2-C-methyl-D-erythritol 4-phosphate (MEP). The chain is 1-deoxy-D-xylulose 5-phosphate reductoisomerase from Prochlorococcus marinus (strain NATL1A).